A 144-amino-acid polypeptide reads, in one-letter code: D-aminoacyl-tRNA deacylase (144 aa).

Positions Gly-136–Pro-137 match the Gly-cisPro motif, important for rejection of L-amino acids motif.

Belongs to the DTD family. In terms of assembly, homodimer.

It is found in the cytoplasm. It catalyses the reaction glycyl-tRNA(Ala) + H2O = tRNA(Ala) + glycine + H(+). It carries out the reaction a D-aminoacyl-tRNA + H2O = a tRNA + a D-alpha-amino acid + H(+). In terms of biological role, an aminoacyl-tRNA editing enzyme that deacylates mischarged D-aminoacyl-tRNAs. Also deacylates mischarged glycyl-tRNA(Ala), protecting cells against glycine mischarging by AlaRS. Acts via tRNA-based rather than protein-based catalysis; rejects L-amino acids rather than detecting D-amino acids in the active site. By recycling D-aminoacyl-tRNA to D-amino acids and free tRNA molecules, this enzyme counteracts the toxicity associated with the formation of D-aminoacyl-tRNA entities in vivo and helps enforce protein L-homochirality. This Vibrio atlanticus (strain LGP32) (Vibrio splendidus (strain Mel32)) protein is D-aminoacyl-tRNA deacylase.